An 815-amino-acid chain; its full sequence is (-)-kolavenyl diphosphate synthase TPS14, chloroplastic (815 aa).

Residues 1 to 51 (MFMSSSSSSHARRPQLSSFSYLHPPLPFPGLSFFNTRDKRVNFDSTRIICI) constitute a chloroplast transit peptide. Lysine 247 is a binding site for substrate. Residues aspartate 379 and aspartate 381 each coordinate Mg(2+). The short motif at 379 to 382 (DIDD) is the DXDD motif element. Substrate is bound at residue lysine 465.

This sequence belongs to the terpene synthase family. Tpsc subfamily. Mg(2+) is required as a cofactor.

Its subcellular location is the plastid. It localises to the chloroplast. The catalysed reaction is (2E,6E,10E)-geranylgeranyl diphosphate = (-)-kolavenyl diphosphate. Inhibited by high concentrations of magnesium. Diterpene synthase that catalyzes the formation of (-)-kolavenyl diphosphate from geranylgeranyl diphosphate (GGPP). The sequence is that of (-)-kolavenyl diphosphate synthase TPS14, chloroplastic from Tripterygium wilfordii (Thunder God vine).